The chain runs to 231 residues: Large ribosomal subunit protein uL1 (231 aa).

The protein belongs to the universal ribosomal protein uL1 family. In terms of assembly, part of the 50S ribosomal subunit.

Binds directly to 23S rRNA. The L1 stalk is quite mobile in the ribosome, and is involved in E site tRNA release. In terms of biological role, protein L1 is also a translational repressor protein, it controls the translation of the L11 operon by binding to its mRNA. This chain is Large ribosomal subunit protein uL1, found in Mycoplasmopsis agalactiae (strain NCTC 10123 / CIP 59.7 / PG2) (Mycoplasma agalactiae).